The sequence spans 71 residues: Prophage lysis protein S homolog EssQ (71 aa).

Belongs to the lambda phage S protein family.

This chain is Prophage lysis protein S homolog EssQ (essQ), found in Escherichia coli (strain K12).